A 358-amino-acid polypeptide reads, in one-letter code: Isopentenyl-diphosphate delta-isomerase (358 aa).

Residue 12–13 (RK) participates in substrate binding. FMN is bound by residues 69–71 (AMT), serine 99, and asparagine 128. Glutamine 158 is a binding site for substrate. Glutamate 159 contacts Mg(2+). FMN-binding positions include lysine 190, threonine 220, 267-269 (GIR), and 288-289 (AG).

The protein belongs to the IPP isomerase type 2 family. Homooctamer. Dimer of tetramers. It depends on FMN as a cofactor. NADPH serves as cofactor. Requires Mg(2+) as cofactor.

The protein localises to the cytoplasm. The enzyme catalyses isopentenyl diphosphate = dimethylallyl diphosphate. In terms of biological role, involved in the biosynthesis of isoprenoids. Catalyzes the 1,3-allylic rearrangement of the homoallylic substrate isopentenyl (IPP) to its allylic isomer, dimethylallyl diphosphate (DMAPP). This is Isopentenyl-diphosphate delta-isomerase from Listeria welshimeri serovar 6b (strain ATCC 35897 / DSM 20650 / CCUG 15529 / CIP 8149 / NCTC 11857 / SLCC 5334 / V8).